We begin with the raw amino-acid sequence, 333 residues long: L-lactate dehydrogenase B chain (333 aa).

NAD(+) contacts are provided by residues 29–57 and Arg-99; that span reads GQVG…LEDK. Substrate is bound by residues Arg-106, Asn-138, and Arg-169. Residue Asn-138 participates in NAD(+) binding. His-193 (proton acceptor) is an active-site residue. Residue Thr-248 participates in substrate binding.

This sequence belongs to the LDH/MDH superfamily. LDH family. As to quaternary structure, homotetramer.

It localises to the cytoplasm. It catalyses the reaction (S)-lactate + NAD(+) = pyruvate + NADH + H(+). It functions in the pathway fermentation; pyruvate fermentation to lactate; (S)-lactate from pyruvate: step 1/1. In terms of biological role, interconverts simultaneously and stereospecifically pyruvate and lactate with concomitant interconversion of NADH and NAD(+). The protein is L-lactate dehydrogenase B chain (LDHB) of Caiman crocodilus apaporiensis (Rio Apaporis caiman).